Consider the following 39-residue polypeptide: Potassium channel toxin alpha-KTx 2.2 (39 aa).

3 disulfides stabilise this stretch: C7–C29, C13–C34, and C17–C36. The interval 37 to 39 (YPH) is interaction with Kv1.3 channels.

It belongs to the short scorpion toxin superfamily. Potassium channel inhibitor family. Alpha-KTx 02 subfamily. Expressed by the venom gland.

It localises to the secreted. Its function is as follows. Potent inhibitor of voltage-gated potassium channels such as Kv1.1/KCNA1 (IC(50)=0.144 nM), Kv1.2/KCNA2 (IC(50)=0.675 nM), Kv1.3/KCNA3 (IC(50)=0.23 nM) and Shaker (Kd=160 nM). Suppresses expression of the Kv1.3/KCNA3 channel in lipopolysaccharide (LPS)-stimulated mouse macrophages. Down-regulates secretion of nitric oxide (NO) and inflammatory cytokines, such as TNF-alpha/TNF, IL-1beta/IL1B and IL6, in LPS-stimulated mouse macrophages in a manner dependent on Kv1.3/KCNA3 channel blockage. Reduces activation of MAPK and NF-kappa-B signaling pathways in LPS-stimulated mouse macrophages. Modulates intracellular Ca(2+) signaling in human PMA/ionomycin-triggered T-cells. Interferes with the activation of the MAPK, NF-kappa-B and NFATc1 pathways in human PMA/ionomycin-triggered T-cells. Reduces proliferation of human PMA/ionomycin-triggered T-cells. Down-regulates secretion of cytokines, such as TNF-alpha/TNF and IL2, in human PMA/ionomycin-triggered T-cells. This chain is Potassium channel toxin alpha-KTx 2.2, found in Centruroides margaritatus (Central American bark Scorpion).